A 577-amino-acid chain; its full sequence is Phosphoethanolamine transferase CptA (577 aa).

5 helical membrane-spanning segments follow: residues L17 to L37, G45 to G65, V69 to Y89, Y119 to W139, and L154 to I174.

The protein belongs to the phosphoethanolamine transferase family. EptC/CptA subfamily.

It is found in the cell inner membrane. It functions in the pathway bacterial outer membrane biogenesis; LPS core biosynthesis. Its function is as follows. Catalyzes the addition of a phosphoethanolamine moiety to the outer membrane lipopolysaccharide core. The polypeptide is Phosphoethanolamine transferase CptA (cptA) (Salmonella typhimurium (strain LT2 / SGSC1412 / ATCC 700720)).